A 130-amino-acid polypeptide reads, in one-letter code: Methylglyoxal synthase (130 aa).

The region spanning Met1 to Cys130 is the MGS-like domain. Residues His11, Lys15, Thr37 to Thr40, and Ser57 to Gly58 contribute to the substrate site. Asp63 functions as the Proton donor/acceptor in the catalytic mechanism. Residue His90 participates in substrate binding.

Belongs to the methylglyoxal synthase family.

The enzyme catalyses dihydroxyacetone phosphate = methylglyoxal + phosphate. Its function is as follows. Catalyzes the formation of methylglyoxal from dihydroxyacetone phosphate. The protein is Methylglyoxal synthase of Burkholderia lata (strain ATCC 17760 / DSM 23089 / LMG 22485 / NCIMB 9086 / R18194 / 383).